The primary structure comprises 606 residues: NADH-ubiquinone oxidoreductase chain 5 (606 aa).

The next 15 membrane-spanning stretches (helical) occupy residues 3 to 23 (VINLIPTLMLTSLIILTLPII), 38 to 58 (ITKTAVTYAFAISLIPTLLFI), 87 to 107 (FFSLTFMPIALFITWSIMEFS), 124 to 144 (LLLFLITMLILVSANNLLQLF), 180 to 200 (IGDMGFIMMMAWFTIHLNSWE), 216 to 236 (LLGLLLASAGKSAQFGLHPWL), 244 to 264 (TPVSALLHSSTMVMAGVFTLI), 276 to 296 (IQTSTLCLGAITTLFTAICAL), 304 to 323 (IIALSTSSQLGLMMVTIGIN), 328 to 350 (AFIHMCTHAFFKAMLFLSSGSII), 369 to 389 (MPITSTAIIIGSLALTGMPFL), 404 to 424 (MSYINTWALLITLIAVSMTAS), 460 to 480 (LILGSIFMGFLISMNTIPHTT), 483 to 503 (MTMPPHLKFMALAVTLLGFTV), and 586 to 606 (LMKLYFLSFLLSITLGLLIAL).

Belongs to the complex I subunit 5 family. In terms of assembly, core subunit of respiratory chain NADH dehydrogenase (Complex I) which is composed of 45 different subunits.

It localises to the mitochondrion inner membrane. The catalysed reaction is a ubiquinone + NADH + 5 H(+)(in) = a ubiquinol + NAD(+) + 4 H(+)(out). In terms of biological role, core subunit of the mitochondrial membrane respiratory chain NADH dehydrogenase (Complex I) which catalyzes electron transfer from NADH through the respiratory chain, using ubiquinone as an electron acceptor. Essential for the catalytic activity and assembly of complex I. This chain is NADH-ubiquinone oxidoreductase chain 5 (MT-ND5), found in Loxodonta africana (African elephant).